A 310-amino-acid chain; its full sequence is MQIYPLRLLPNKIDFDFMNFKKVSYTFSIILSLISVISIGIYKFNFGIDFVGGIVIEVRLDQTPDLPKMRQILGELGIGEVVLQNFGSERDLSIRLGSSSEANLMENIELIKASLHNNFPYKFEYRKVDFVGPQVGRQLIEAGTMAMLFSFLAIMVYIWVRFEWYFGLGILIALMHDLILALGFMSMTKLDCNLSTIAAVLTIIGYSVNDSVVIYDRIRENLRKYYKKNITEIINLSINETLSRTILTVITTLLANLALILFGGEAIRSFSVLVFFGIIAGTYSSIFISAPILTMFANKKFNNKKFNNKR.

6 helical membrane passes run 20-42 (FKKV…IGIY), 140-160 (IEAG…YIWV), 164-184 (WYFG…ALGF), 194-214 (LSTI…SVVI), 246-266 (ILTV…GGEA), and 272-292 (VLVF…SAPI).

It belongs to the SecD/SecF family. SecF subfamily. As to quaternary structure, forms a complex with SecD. Part of the essential Sec protein translocation apparatus which comprises SecA, SecYEG and auxiliary proteins SecDF-YajC and YidC.

The protein resides in the cell inner membrane. Functionally, part of the Sec protein translocase complex. Interacts with the SecYEG preprotein conducting channel. SecDF uses the proton motive force (PMF) to complete protein translocation after the ATP-dependent function of SecA. In Rickettsia canadensis (strain McKiel), this protein is Protein translocase subunit SecF.